The chain runs to 361 residues: MKFGWIKTTGNDLEERMESVKDALESSIPGIIAEKEEISSVRELGNIKIVSDNLDADVVLINKGEDLEILKSAKLSGKETGVYVVINTKEDEVYATDVSKLDFVDYVVLEGSDWTIIPLENIIADLFSEEIKIVSVVTNVKDAEAAYEILEKGVDGVVLIPKDINEVKDFSKLIERMNSESVKLDYATVTKIEPVGSGDRVCIDTCSMMEMGEGMLIGSYSRGMFLVHSETVENPYVATRPFRVNAGPVHAYILCPENKTKYLSDLKAGDKVLVVNKNGETREAIIGRVKIEKRPLFLVEAEYNGENLRTILQNAETIRLVGEDGKPVSVVDLKVGTKVLIKPDENARHFGMAIKETIIEK.

The protein belongs to the archaeal-type DHQ synthase family.

It carries out the reaction 2-amino-2,3,7-trideoxy-D-lyxo-hept-6-ulosonate + NAD(+) + H2O = 3-dehydroquinate + NH4(+) + NADH + H(+). Catalyzes the oxidative deamination and cyclization of 2-amino-3,7-dideoxy-D-threo-hept-6-ulosonic acid (ADH) to yield 3-dehydroquinate (DHQ), which is fed into the canonical shikimic pathway of aromatic amino acid biosynthesis. The chain is 3-dehydroquinate synthase from Methanococcus maripaludis (strain DSM 14266 / JCM 13030 / NBRC 101832 / S2 / LL).